The sequence spans 283 residues: Acetyl-coenzyme A carboxylase carboxyl transferase subunit beta (283 aa).

Residues 23–283 (LWIKCPSCSE…DFLMAGKAAA (261 aa)) enclose the CoA carboxyltransferase N-terminal domain. The Zn(2+) site is built by cysteine 27, cysteine 30, cysteine 46, and cysteine 49. A C4-type zinc finger spans residues 27-49 (CPSCSEMLFTKEYEDNLSVCPHC).

Belongs to the AccD/PCCB family. As to quaternary structure, acetyl-CoA carboxylase is a heterohexamer composed of biotin carboxyl carrier protein (AccB), biotin carboxylase (AccC) and two subunits each of ACCase subunit alpha (AccA) and ACCase subunit beta (AccD). Zn(2+) serves as cofactor.

It is found in the cytoplasm. It catalyses the reaction N(6)-carboxybiotinyl-L-lysyl-[protein] + acetyl-CoA = N(6)-biotinyl-L-lysyl-[protein] + malonyl-CoA. It functions in the pathway lipid metabolism; malonyl-CoA biosynthesis; malonyl-CoA from acetyl-CoA: step 1/1. Component of the acetyl coenzyme A carboxylase (ACC) complex. Biotin carboxylase (BC) catalyzes the carboxylation of biotin on its carrier protein (BCCP) and then the CO(2) group is transferred by the transcarboxylase to acetyl-CoA to form malonyl-CoA. This Novosphingobium aromaticivorans (strain ATCC 700278 / DSM 12444 / CCUG 56034 / CIP 105152 / NBRC 16084 / F199) protein is Acetyl-coenzyme A carboxylase carboxyl transferase subunit beta.